Reading from the N-terminus, the 1063-residue chain is Cation efflux system protein CzcA (1063 aa).

10 consecutive transmembrane segments (helical) span residues 14–29 (WLVL…LGIF), 350–370 (GAVL…AALI), 452–472 (LIFG…LTGV), 487–507 (ALLG…ALFI), 534–554 (LANT…CVAI), 883–903 (VVVP…FNNI), 906–926 (GLLV…ALWI), 937–957 (VGFI…LSFI), 982–1004 (VLMT…GTGA), and 1013–1033 (VVIG…PVLY). The segment at 1040–1063 (DEDAEDTREPVTQTHQPDQGRQPA) is disordered. Residues 1049–1063 (PVTQTHQPDQGRQPA) show a composition bias toward polar residues.

The protein belongs to the resistance-nodulation-cell division (RND) (TC 2.A.6) family.

It localises to the cell membrane. Functionally, has a low cation transport activity for cobalt, it is essential for the expression of cobalt, zinc, and cadmium resistance. CzcA and CzcB together would act in zinc efflux nearly as effectively as the complete CZC efflux system (CzcABC). The polypeptide is Cation efflux system protein CzcA (czcA) (Alcaligenes sp. (strain CT14)).